The chain runs to 309 residues: Methionine synthase (309 aa).

Histidine 201, cysteine 203, glutamate 224, and cysteine 285 together coordinate Zn(2+).

Belongs to the archaeal MetE family. Requires Zn(2+) as cofactor.

It functions in the pathway amino-acid biosynthesis; L-methionine biosynthesis via de novo pathway. Is activated by phosphates. Functionally, catalyzes the transfer of a methyl group to L-homocysteine resulting in methionine formation. Can use methylcobalamin and methylcobinamide as methyl donors, but methylcobalamin is not considered to be the physiological substrate. It was proposed that, in vivo, a so-far-unidentified enzyme catalyzes methyltransfer from 5-methyltetrahydromethanopterin (5-CH3-H4MPT) to a corrinoid protein, and that the MetE gene product catalyzes the further transfer to L-homocysteine. Is not active with L-cysteine, coenzyme M, coenzyme B, glutathione or dithiothreitol as substrate. The chain is Methionine synthase from Methanothermobacter marburgensis (strain ATCC BAA-927 / DSM 2133 / JCM 14651 / NBRC 100331 / OCM 82 / Marburg) (Methanobacterium thermoautotrophicum).